An 839-amino-acid polypeptide reads, in one-letter code: LPS-assembly protein LptD (839 aa).

Residues 1–21 (MAIGITACVLSLINYQGLAYS) form the signal peptide.

This sequence belongs to the LptD family. As to quaternary structure, component of the lipopolysaccharide transport and assembly complex. Interacts with LptE and LptA.

The protein localises to the cell outer membrane. Its function is as follows. Together with LptE, is involved in the assembly of lipopolysaccharide (LPS) at the surface of the outer membrane. The sequence is that of LPS-assembly protein LptD from Legionella pneumophila (strain Paris).